Here is a 312-residue protein sequence, read N- to C-terminus: HPr kinase/phosphorylase (312 aa).

Active-site residues include H139 and K160. An ATP-binding site is contributed by 154–161 (GSSGVGKS). S161 lines the Mg(2+) pocket. The active-site Proton acceptor; for phosphorylation activity. Proton donor; for dephosphorylation activity is the D178. The interval 202–211 (LEIRGLGIIN) is important for the catalytic mechanism of both phosphorylation and dephosphorylation. E203 serves as a coordination point for Mg(2+). R244 is a catalytic residue. The segment at 265-270 (PVRPGR) is important for the catalytic mechanism of dephosphorylation.

Belongs to the HPrK/P family. Homohexamer. Mg(2+) is required as a cofactor.

It catalyses the reaction [HPr protein]-L-serine + ATP = [HPr protein]-O-phospho-L-serine + ADP + H(+). The enzyme catalyses [HPr protein]-O-phospho-L-serine + phosphate + H(+) = [HPr protein]-L-serine + diphosphate. In terms of biological role, catalyzes the ATP- as well as the pyrophosphate-dependent phosphorylation of a specific serine residue in HPr, a phosphocarrier protein of the phosphoenolpyruvate-dependent sugar phosphotransferase system (PTS). HprK/P also catalyzes the pyrophosphate-producing, inorganic phosphate-dependent dephosphorylation (phosphorolysis) of seryl-phosphorylated HPr (P-Ser-HPr). The two antagonistic activities of HprK/P are regulated by several intracellular metabolites, which change their concentration in response to the absence or presence of rapidly metabolisable carbon sources (glucose, fructose, etc.) in the growth medium. Therefore, by controlling the phosphorylation state of HPr, HPrK/P is a sensor enzyme that plays a major role in the regulation of carbon metabolism and sugar transport: it mediates carbon catabolite repression (CCR), and regulates PTS-catalyzed carbohydrate uptake and inducer exclusion. The chain is HPr kinase/phosphorylase from Listeria innocua serovar 6a (strain ATCC BAA-680 / CLIP 11262).